The primary structure comprises 2711 residues: Chromodomain-helicase-DNA-binding protein 6 (2711 aa).

4 stretches are compositionally biased toward basic and acidic residues: residues 1 to 12, 100 to 115, 122 to 151, and 158 to 171; these read MKMKIQKKEKQL, EPGE…DREP, EPKE…DGVK, and EASG…KRSC. 2 disordered regions span residues 1-52 and 66-243; these read MKMK…EEAA and EEAD…QVKR. Residues 1-746 are required for DNA-dependent ATPase activity; the sequence is MKMKIQKKEK…MMELRKCCNH (746 aa). Positions 214–224 are enriched in low complexity; that stretch reads SLPNPSLQSPE. Chromo domains lie at 291–342 and 374–438; these read NIIE…KDPR and IEID…KHVE. The Helicase ATP-binding domain maps to 472 to 646; the sequence is LFNWYNRKNC…FSLLNFLEPS (175 aa). 485–492 provides a ligand contact to ATP; that stretch reads DEMGLGKT. The DEAH box motif lies at 597–600; the sequence is DEAH. Residues 786-955 enclose the Helicase C-terminal domain; it reads LIDKLLPKLI…LSKMEVEDLL (170 aa). Residues 1318–1389 form a disordered region; it reads SLSAEQGVTD…SDPDKSPWPV (72 aa). Over residues 1320–1329 the composition is skewed to polar residues; that stretch reads SAEQGVTDGT. Residues 1332–1350 show a composition bias toward basic and acidic residues; it reads IPERGNIDKEDSAEDKLDG. Residues 1448–1502 form the Myb-like domain; sequence RWTRREQADFYRTVSSFGVVYDQEKKAFDWTQFRIISRLDKKSDESLEHYFYSFV. Ser1865 carries the post-translational modification Phosphoserine. Disordered stretches follow at residues 1951–1978, 1997–2059, 2124–2147, 2321–2350, 2373–2419, 2550–2602, and 2641–2711; these read SEDS…TVEG, EPWK…ASGI, LPTP…ATEH, TTLS…QAEK, GFGT…RGFL, SASL…ITTS, and RHSE…EDTN. Basic and acidic residues predominate over residues 2017-2036; the sequence is SEPKPEDMDFENKDDYEKDG. Low complexity-rich tracts occupy residues 2130-2140 and 2333-2349; these read SSSAGSRSSLS and ATSS…SQAE. The segment covering 2550 to 2563 has biased composition (low complexity); it reads SASLASTKSGTSAT. Residues 2565–2586 are compositionally biased toward basic and acidic residues; sequence KSTEDKLSGHDVNTDALVDDKP. Polar residues-rich tracts occupy residues 2591 to 2602 and 2677 to 2688; these read FSDQSEPTITTS and SDQNCTESSATV. A compositionally biased stretch (basic and acidic residues) spans 2690 to 2711; the sequence is PEREHVAQAREEGLKDSNEDTN.

This sequence belongs to the SNF2/RAD54 helicase family. In terms of assembly, interacts with NFE2L2; involved in activation of the transcription. As to expression, widely expressed.

It is found in the nucleus. Its subcellular location is the nucleoplasm. It carries out the reaction ATP + H2O = ADP + phosphate + H(+). Functionally, ATP-dependent chromatin-remodeling factor. Regulates transcription by disrupting nucleosomes in a largely non-sliding manner which strongly increases the accessibility of chromatin. Activates transcription of specific genes in response to oxidative stress through interaction with NFE2L2. In Mus musculus (Mouse), this protein is Chromodomain-helicase-DNA-binding protein 6 (Chd6).